Reading from the N-terminus, the 148-residue chain is Lysozyme-like protein 6 (148 aa).

A signal peptide spans 1–19 (MTKALLIYLVSSFLALNQA). The 129-residue stretch at 20-148 (SLISRCDLAQ…FYWLTGCRLR (129 aa)) folds into the C-type lysozyme domain. 4 disulfides stabilise this stretch: cysteine 25–cysteine 145, cysteine 49–cysteine 133, cysteine 83–cysteine 98, and cysteine 94–cysteine 112. Residues glutamate 54 and aspartate 71 contribute to the active site.

It belongs to the glycosyl hydrolase 22 family. Monomer. Expressed in testis, epididymis and spermatozoa (at protein level). Expressed in late-stage spermatocytes and round spermatids.

The protein resides in the secreted. It is found in the cell surface. Its subcellular location is the cell projection. The protein localises to the cilium. It localises to the flagellum. It catalyses the reaction Hydrolysis of (1-&gt;4)-beta-linkages between N-acetylmuramic acid and N-acetyl-D-glucosamine residues in a peptidoglycan and between N-acetyl-D-glucosamine residues in chitodextrins.. In terms of biological role, may be involved sperm-egg plasma membrane adhesion and fusion during fertilization. Exhibits bacteriolytic activity in vitro against Micrococcus luteus and Staphylococcus aureus. Shows weak bacteriolytic activity against Gram-positive bacteria at physiological pH. Bacteriolytic activity is pH-dependent, with a maximum at around pH 5.6. The protein is Lysozyme-like protein 6 (LYZL6) of Homo sapiens (Human).